The chain runs to 1174 residues: MEELIWEQYTVTLQKDSKRGFGIAVSGGRDNPHFENGETSIVISDVLPGGPADGLLQENDRVVMVNGTPMEDVLHSFAVQQLRKSGKIAAIVVKRPRKVQLAPPQGSLPVDEDDRAFEVMDEFDGRSARSGYSERSRRSSHGGRSRSWEDSPERGRPHERAWSQERERSRGRSLERGLDHDDDYRRPRERSRGRSLERGLDHDDDYGRPGERSHGMSTDRGYDRGYDRGYDRGYDRTYSPEAEYGRRTQPDARHAGSRSRSREHLRSRSPSPELRGRPDHAGQPDSDRPIGVLLMKSKANEEYGLRLGSQIFIKQMTRTALATKDGNLHEGDIILKINGTVTENMSLTDARKLIEKSRGKLQLVVLRDSKQTLINIPSLNDSDSEIEDISEIESNRSFSPEERRQQYSDYDYHSSNEKLKERPNSREDMQNRWSRMGATPTPFKSMGDIASVVGTENSKEPRYQEEPPAPQPKAAPRTFLRPSPEDEAIYGPNTKMVRFKKGDSVGLRLAGGNDVGIFVAGIQEGTSAEQEGLQEGDQILKVNTQDFRGLVREDAVLYLLEIPKGEMVTILAQSRADVYRDILACGRGDSFFIRSHFECEKETPQSLAFSRGEVFRVVDTLYDGKLGHWLAVRIGNELEKGLIPNKSRAEQMASVQNAQRDNAGDRADFWRMRGQRSGMKKNLRKSREDLTAAVSVSTKFPAYERVLLREAGFKRPVVLFGPIADIALEKLANELPDLFQTAKTEPKDAGSEKSSGVVRLNTVRQIIEQDKHALLDVTPKAVDLLNYTQWFPIVIFFNPDSRQGVKTMRQRLNPTSNKSSRKLYDQANKLKKTCAHLFTATINLNSANDSWFGSLKDTIQHQQGEAVWVSEGKMEGMDDDPEDRMSYLTAMGADYLSCDSRLISDFEDTDGEGGAYTDNELDEPAEEPLVSSITRSSEPVQHEESIRKPSPEPRAQMRRAASRDQLRDSSPPPAFKPEPPKAKTQNREESFDISRSHDYKSNPSAVAGNEVSGASTRSCPPPIAAKPSFGRSILKPSTPVPSPESEEVGEGSEEQEGAPKSVLGKVKIFEKMDHKARLQRMQELQEAQNARIEIAQKHPDIYAVPIKTHKPDPGLSQHTSSRPPEPQKGPSRLYQDPRGSYGSDAEEEEYRQQLSEHSKRGYYSQPSRYRDTEL.

The PDZ 1 domain maps to 10 to 97 (TVTLQKDSKR…IAAIVVKRPR (88 aa)). Residues Ser107, Ser127, Ser130, Ser140, Ser145, Ser147, Ser151, Ser173, Ser195, and Ser217 each carry the phosphoserine modification. Basic and acidic residues predominate over residues 125–137 (GRSARSGYSERSR). Residues 125-290 (GRSARSGYSE…AGQPDSDRPI (166 aa)) are disordered. Positions 146 to 214 (RSWEDSPERG…DYGRPGERSH (69 aa)) are enriched in basic and acidic residues. Basic and acidic residues predominate over residues 220 to 235 (RGYDRGYDRGYDRGYD). A Phosphoserine modification is found at Ser239. 2 stretches are compositionally biased toward basic and acidic residues: residues 243-266 (EYGR…EHLR) and 274-288 (LRGR…DSDR). Residues 291-369 (GVLLMKSKAN…KLQLVVLRDS (79 aa)) form the PDZ 2 domain. Phosphoserine occurs at positions 309, 382, 384, 390, 399, 408, 414, and 415. The segment at 391–430 (EIESNRSFSPEERRQQYSDYDYHSSNEKLKERPNSREDMQ) is disordered. Residues 399-430 (SPEERRQQYSDYDYHSSNEKLKERPNSREDMQ) show a composition bias toward basic and acidic residues. Residue Thr439 is modified to Phosphothreonine. The interval 456–490 (ENSKEPRYQEEPPAPQPKAAPRTFLRPSPEDEAIY) is disordered. Phosphoserine is present on Ser483. Positions 493–574 (NTKMVRFKKG…GEMVTILAQS (82 aa)) constitute a PDZ 3 domain. Tyr558 carries the phosphotyrosine modification. In terms of domain architecture, SH3 spans 588–653 (GDSFFIRSHF…PNKSRAEQMA (66 aa)). The 182-residue stretch at 679 to 860 (MKKNLRKSRE…WFGSLKDTIQ (182 aa)) folds into the Guanylate kinase-like domain. Ser686 and Ser886 each carry phosphoserine. At Thr889 the chain carries Phosphothreonine. Phosphoserine is present on residues Ser897 and Ser904. 2 disordered regions span residues 904–1065 (SDFE…VLGK) and 1100–1174 (DIYA…DTEL). Phosphothreonine occurs at positions 909 and 917. The segment covering 940 to 951 (VQHEESIRKPSP) has biased composition (basic and acidic residues). 5 positions are modified to phosphoserine: Ser950, Ser962, Ser970, Ser990, and Ser1052. Over residues 978-1000 (EPPKAKTQNREESFDISRSHDYK) the composition is skewed to basic and acidic residues. The segment covering 1044–1056 (ESEEVGEGSEEQE) has biased composition (acidic residues). The residue at position 1102 (Tyr1102) is a Phosphotyrosine. Phosphoserine occurs at positions 1131 and 1143. Basic and acidic residues predominate over residues 1150-1159 (YRQQLSEHSK). The tract at residues 1172–1174 (TEL) is interaction with SCRIB.

It belongs to the MAGUK family. As to quaternary structure, homodimer. Interacts (via PDZ2 domain) with TJP1/ZO1 (via PDZ2 domain). Interacts with UBN1. Interacts with SCRIB. Interacts with OCLN. Interacts with SAFB in the nucleus. Interacts with USP53 (via the C-terminal region). Interacts with claudins, including CLDN1, CLDN2, CLDN3, CLDN5 and CLDN7. Interacts with CLDN18. Interacts (via N-terminus) with CTNNA1. Post-translationally, phosphorylated.

Its subcellular location is the cell junction. The protein localises to the adherens junction. It is found in the cell membrane. The protein resides in the nucleus. It localises to the tight junction. Plays a role in tight junctions and adherens junctions. Acts as a positive regulator of RANKL-induced osteoclast differentiation, potentially via mediating downstream transcriptional activity. The polypeptide is Tight junction protein 2 (Canis lupus familiaris (Dog)).